The chain runs to 353 residues: ATP-dependent kinase YFH7 (353 aa).

Residue 31-39 participates in ATP binding; the sequence is GSPGSGKST.

It belongs to the YFH7 family.

Functionally, ATP-dependent kinase that could be involved in endoplasmic reticulum membrane assembly. In Saccharomyces cerevisiae (strain Lalvin EC1118 / Prise de mousse) (Baker's yeast), this protein is ATP-dependent kinase YFH7 (YFH7).